Reading from the N-terminus, the 405-residue chain is Nicotinate phosphoribosyltransferase (405 aa).

His224 bears the Phosphohistidine; by autocatalysis mark.

The protein belongs to the NAPRTase family. Post-translationally, transiently phosphorylated on a His residue during the reaction cycle. Phosphorylation strongly increases the affinity for substrates and increases the rate of nicotinate D-ribonucleotide production. Dephosphorylation regenerates the low-affinity form of the enzyme, leading to product release.

It catalyses the reaction nicotinate + 5-phospho-alpha-D-ribose 1-diphosphate + ATP + H2O = nicotinate beta-D-ribonucleotide + ADP + phosphate + diphosphate. It functions in the pathway cofactor biosynthesis; NAD(+) biosynthesis; nicotinate D-ribonucleotide from nicotinate: step 1/1. Functionally, catalyzes the synthesis of beta-nicotinate D-ribonucleotide from nicotinate and 5-phospho-D-ribose 1-phosphate at the expense of ATP. This Methanococcoides burtonii (strain DSM 6242 / NBRC 107633 / OCM 468 / ACE-M) protein is Nicotinate phosphoribosyltransferase.